The primary structure comprises 72 residues: Probable neurotoxin pcD-993 (72 aa).

The N-terminal stretch at M1 to S19 is a signal peptide. The LCN-type CS-alpha/beta domain maps to R21–R72. Disulfide bonds link C35/C56, C42/C66, and C46/C68. Residue R72 is a propeptide, removed by a carboxypeptidase.

This sequence belongs to the long (3 C-C) scorpion toxin superfamily. Expressed by the venom gland.

It localises to the secreted. The chain is Probable neurotoxin pcD-993 from Androctonus australis (Sahara scorpion).